The sequence spans 341 residues: Uroporphyrinogen decarboxylase (341 aa).

Residues 26 to 30 (RQAGR), Asp-75, Tyr-150, Ser-205, and His-318 contribute to the substrate site.

It belongs to the uroporphyrinogen decarboxylase family. As to quaternary structure, homodimer.

It localises to the cytoplasm. It carries out the reaction uroporphyrinogen III + 4 H(+) = coproporphyrinogen III + 4 CO2. Its pathway is porphyrin-containing compound metabolism; protoporphyrin-IX biosynthesis; coproporphyrinogen-III from 5-aminolevulinate: step 4/4. In terms of biological role, catalyzes the decarboxylation of four acetate groups of uroporphyrinogen-III to yield coproporphyrinogen-III. The protein is Uroporphyrinogen decarboxylase of Thermus thermophilus (strain ATCC 27634 / DSM 579 / HB8).